The primary structure comprises 261 residues: Probable membrane transporter protein XF_0764 (261 aa).

The next 8 helical transmembrane spans lie at 6-26 (LIVT…LGGG), 29-49 (ILAT…IAIG), 78-98 (VIFA…GMLI), 99-119 (DGQR…LLML), 150-170 (AASG…LIFA), 175-195 (TINA…ITTL), 205-225 (WTIA…GTLL), and 239-259 (VFGL…WASL).

It belongs to the 4-toluene sulfonate uptake permease (TSUP) (TC 2.A.102) family.

The protein resides in the cell membrane. The protein is Probable membrane transporter protein XF_0764 of Xylella fastidiosa (strain 9a5c).